Reading from the N-terminus, the 309-residue chain is uncharacterized protein (309 aa).

The HTH lysR-type domain occupies 1-60 (MKPLLDVLMILDALEKEGSFAAASAKLYKTPSALSYTVHKLESDLNIQLLDRSGHRAKFT). The segment at residues 20-39 (FAAASAKLYKTPSALSYTVH) is a DNA-binding region (H-T-H motif).

It belongs to the LysR transcriptional regulatory family.

This is an uncharacterized protein from Escherichia coli (strain K12).